A 225-amino-acid polypeptide reads, in one-letter code: NAD(P)H-quinone oxidoreductase subunit K, chloroplastic (225 aa).

4 residues coordinate [4Fe-4S] cluster: cysteine 43, cysteine 44, cysteine 108, and cysteine 139.

It belongs to the complex I 20 kDa subunit family. As to quaternary structure, NDH is composed of at least 16 different subunits, 5 of which are encoded in the nucleus. [4Fe-4S] cluster is required as a cofactor.

It localises to the plastid. The protein localises to the chloroplast thylakoid membrane. The catalysed reaction is a plastoquinone + NADH + (n+1) H(+)(in) = a plastoquinol + NAD(+) + n H(+)(out). It carries out the reaction a plastoquinone + NADPH + (n+1) H(+)(in) = a plastoquinol + NADP(+) + n H(+)(out). Functionally, NDH shuttles electrons from NAD(P)H:plastoquinone, via FMN and iron-sulfur (Fe-S) centers, to quinones in the photosynthetic chain and possibly in a chloroplast respiratory chain. The immediate electron acceptor for the enzyme in this species is believed to be plastoquinone. Couples the redox reaction to proton translocation, and thus conserves the redox energy in a proton gradient. This chain is NAD(P)H-quinone oxidoreductase subunit K, chloroplastic, found in Lolium perenne (Perennial ryegrass).